Reading from the N-terminus, the 523-residue chain is Cytochrome P450 52A3-B (523 aa).

A helical transmembrane segment spans residues 17 to 34 (WYTILFGAAFTYFLSIAL). Residue Cys471 participates in heme binding.

The protein belongs to the cytochrome P450 family. Heme is required as a cofactor.

It is found in the membrane. Together with an NADPH cytochrome P450 the enzyme system catalyzes the terminal hydroxylation as the first step in the assimilation of alkanes and fatty acids. The protein is Cytochrome P450 52A3-B (CYP52A3-B) of Candida maltosa (Yeast).